Consider the following 494-residue polypeptide: DnaJ-related protein rsp1 (494 aa).

The J domain occupies 12 to 78; it reads DYYTILGAES…KLRELFDQRR (67 aa). Positions 229 to 242 are enriched in polar residues; that stretch reads SEISNGLNSNGVEN. The interval 229–354 is disordered; it reads SEISNGLNSN…NDSTSNSTEY (126 aa). Residues 243-256 show a composition bias toward low complexity; that stretch reads SSITKSSPRSSSSS. The segment covering 270–287 has biased composition (polar residues); it reads IFTSPNTPEHPSVYQTDI. Residues 321–331 show a composition bias toward low complexity; sequence LSRSKSSSLSR. The segment covering 332 to 354 has biased composition (polar residues); sequence NQTRSQLNDLSAENDSTSNSTEY.

In terms of assembly, interacts iwth ssa1.

It is found in the cytoplasm. Its subcellular location is the cytoskeleton. It localises to the nucleus. Has a role in the proper organization of the interphase microtubule cytoskeleton. Required for equatorial microtubule organizing center (eMTOC) disassembly into satellites, contributing to the dynamic redistribution of MTOC components for organization of interphase microtubules. The protein is DnaJ-related protein rsp1 (rsp1) of Schizosaccharomyces pombe (strain 972 / ATCC 24843) (Fission yeast).